Consider the following 165-residue polypeptide: Cytochrome c-type biogenesis protein CcmE (165 aa).

At 1 to 29 (MSATAEQNARNPKGKGGFARTVSQRKRKR) the chain is on the cytoplasmic side. A helical; Signal-anchor for type II membrane protein transmembrane segment spans residues 30 to 50 (LFLIGGALAVLAVAVGLMLTA). The Periplasmic portion of the chain corresponds to 51–165 (FNQDIRFFRT…LKKKGVWEGK (115 aa)). His-143 and Tyr-147 together coordinate heme.

The protein belongs to the CcmE/CycJ family.

The protein resides in the cell inner membrane. Heme chaperone required for the biogenesis of c-type cytochromes. Transiently binds heme delivered by CcmC and transfers the heme to apo-cytochromes in a process facilitated by CcmF and CcmH. The protein is Cytochrome c-type biogenesis protein CcmE of Brucella abortus (strain S19).